Here is a 234-residue protein sequence, read N- to C-terminus: Carboxy-S-adenosyl-L-methionine synthase (234 aa).

S-adenosyl-L-methionine contacts are provided by residues Tyr-35, 60 to 62 (GCS), 109 to 110 (DV), Asn-124, and Arg-191.

This sequence belongs to the class I-like SAM-binding methyltransferase superfamily. Cx-SAM synthase family. As to quaternary structure, homodimer.

It catalyses the reaction prephenate + S-adenosyl-L-methionine = carboxy-S-adenosyl-L-methionine + 3-phenylpyruvate + H2O. Catalyzes the conversion of S-adenosyl-L-methionine (SAM) to carboxy-S-adenosyl-L-methionine (Cx-SAM). This Campylobacter curvus (strain 525.92) protein is Carboxy-S-adenosyl-L-methionine synthase.